Here is a 408-residue protein sequence, read N- to C-terminus: Peptidase T (408 aa).

His78 contacts Zn(2+). The active site involves Asp80. Asp140 lines the Zn(2+) pocket. Glu174 acts as the Proton acceptor in catalysis. Residues Glu175, Asp197, and His379 each contribute to the Zn(2+) site.

It belongs to the peptidase M20B family. The cofactor is Zn(2+).

The protein resides in the cytoplasm. It carries out the reaction Release of the N-terminal residue from a tripeptide.. In terms of biological role, cleaves the N-terminal amino acid of tripeptides. In Staphylococcus aureus (strain Mu3 / ATCC 700698), this protein is Peptidase T.